We begin with the raw amino-acid sequence, 1746 residues long: Non-reducing polyketide synthase ptaA (1746 aa).

The tract at residues 4-227 is N-terminal acylcarrier protein transacylase domain (SAT); it reads NSGSGTSPWG…ALPVYGGLCH (224 aa). Residues 361–796 enclose the Ketosynthase family 3 (KS3) domain; that stretch reads QSKIAIVGMS…GGNTTIAIEE (436 aa). Active-site for beta-ketoacyl synthase activity residues include Cys-534, His-670, and His-714. The interval 898 to 1218 is malonyl-CoA:ACP transacylase (MAT) domain; it reads FAFTGQGASY…LGALHLAGIP (321 aa). Residues 1286-1605 are product template (PT) domain; the sequence is TSTVHRVIGE…RLLLDRFFSA (320 aa). Positions 1290 to 1425 are N-terminal hotdog fold; that stretch reads HRVIGETFDG…ATLFYGKAND (136 aa). Positions 1290–1600 constitute a PKS/mFAS DH domain; that stretch reads HRVIGETFDG…FRRYPRLLLD (311 aa). His-1322 acts as the Proton acceptor; for dehydratase activity in catalysis. The segment at 1452–1600 is C-terminal hotdog fold; sequence VANRFSRNMA…FRRYPRLLLD (149 aa). Asp-1511 acts as the Proton donor; for dehydratase activity in catalysis. The region spanning 1671–1745 is the Carrier domain; the sequence is DSITVKAMAL…DLRAWLLEYY (75 aa). Position 1705 is an O-(pantetheine 4'-phosphoryl)serine (Ser-1705).

The catalysed reaction is holo-[ACP] + 8 malonyl-CoA + 8 H(+) = atrochrysone carboxyl-[ACP] + 8 CO2 + 8 CoA + 2 H2O. The protein operates within secondary metabolite biosynthesis. In terms of biological role, non-reducing polyketide synthase; part of the gene cluster that mediates the biosynthesis of pestheic acid, a diphenyl ether which is a biosynthetic precursor of the unique chloropupukeananes. The biosynthesis initiates from condensation of acetate and malonate units catalyzed by the non-reducing PKS ptaA. As the ptaA protein is TE/CLC domain-deficient, hydrolysis and Claisen cyclization of the polyketide could be catalyzed by ptaB containing a beta-lactamase domain. The ptaB protein might hydrolyze the thioester bond between the ACP of ptaA and the intermediate to release atrochrysone carboxylic acid, which is spontaneously dehydrated to form endocrocin anthrone. Endocrocin anthrone is then converted to endocrocin, catalyzed by the anthrone oxygenase ptaC. Spontaneous decarboxylation of endocrocin occurs to generate emodin. An O-methyltransferase (ptaH or ptaI) could methylate emodin to form physcion. PtaJ could then catalyze the oxidative cleavage of physcion, and rotation of the intermediate could then afford desmethylisosulochrin. PtaF, a putative NADH-dependent oxidoreductase, might also participate in the oxidative cleavage step. Desmethylisosulochrin is then transformed by another O-methyltransferase (ptaH or ptaI) to form isosulochrin. Chlorination of isosulochrin by ptaM in the cyclohexadienone B ring then produces chloroisosulochrin. PtaE is responsible for the oxidative coupling reactions of both benzophenones isosulochrin and chloroisosulochrin to RES-1214-1 and pestheic acid respectively, regardless of chlorination. The polypeptide is Non-reducing polyketide synthase ptaA (Pestalotiopsis fici (strain W106-1 / CGMCC3.15140)).